We begin with the raw amino-acid sequence, 105 residues long: Large ribosomal subunit protein uL18c (105 aa).

It belongs to the universal ribosomal protein uL18 family. Part of the 50S ribosomal subunit; contacts the 5S rRNA.

It localises to the plastid. Its subcellular location is the chloroplast. Binds 5S rRNA, forms part of the central protuberance of the 50S subunit. This chain is Large ribosomal subunit protein uL18c (rpl18), found in Gracilaria tenuistipitata var. liui (Red alga).